The sequence spans 356 residues: Adenine deaminase (356 aa).

The Zn(2+) site is built by His-23, His-25, and His-211. Glu-214 acts as the Proton donor in catalysis. Position 292 (Asp-292) interacts with Zn(2+). Asp-293 contacts substrate.

This sequence belongs to the metallo-dependent hydrolases superfamily. Adenosine and AMP deaminases family. Adenine deaminase type 2 subfamily. Requires Zn(2+) as cofactor.

The protein localises to the cytoplasm. It is found in the nucleus. The enzyme catalyses adenine + H2O + H(+) = hypoxanthine + NH4(+). Catalyzes the hydrolytic deamination of adenine to hypoxanthine. Plays an important role in the purine salvage pathway and in nitrogen catabolism. In Candida albicans (strain SC5314 / ATCC MYA-2876) (Yeast), this protein is Adenine deaminase.